Here is a 210-residue protein sequence, read N- to C-terminus: MSDEQPAEDETEEAAAESEDTQEVAANAKLFGKWDVAEIHYEDPSTRRYLAVTPVAHTMGRHAQKQFKKSEISIVERLANRLMKTGANAGKKQQALKIVRDAFDIVHERTDENPIQVLVSAVENAAPREETVRLKYGGISVPQAVDTAPQRRVDQALKFLADGAHSASFKTPTDAAEALANQLAGAADYNVQTYAIGQKKEKERVAAAAR.

A compositionally biased stretch (acidic residues) spans M1–Q22. The tract at residues M1–E23 is disordered.

Belongs to the universal ribosomal protein uS7 family. As to quaternary structure, part of the 30S ribosomal subunit. Contacts proteins S9 and S11.

In terms of biological role, one of the primary rRNA binding proteins, it binds directly to 16S rRNA where it nucleates assembly of the head domain of the 30S subunit. Is located at the subunit interface close to the decoding center. The protein is Small ribosomal subunit protein uS7 of Halobacterium salinarum (strain ATCC 29341 / DSM 671 / R1).